A 243-amino-acid chain; its full sequence is Small ribosomal subunit protein uS3 (243 aa).

Positions 39 to 110 (IRGFIQKKYA…QVRINVVEIE (72 aa)) constitute a KH type-2 domain. A disordered region spans residues 215 to 243 (DQPLPVGASPRRKGSRRPQQFEDRSNDGK). The span at 233–243 (QQFEDRSNDGK) shows a compositional bias: basic and acidic residues.

It belongs to the universal ribosomal protein uS3 family. Part of the 30S ribosomal subunit. Forms a tight complex with proteins S10 and S14.

In terms of biological role, binds the lower part of the 30S subunit head. Binds mRNA in the 70S ribosome, positioning it for translation. The chain is Small ribosomal subunit protein uS3 from Prochlorococcus marinus (strain MIT 9211).